The chain runs to 221 residues: Ependymin (221 aa).

The signal sequence occupies residues 1–21; sequence MQAFAVAALSIWLCLGATTLA. N-linked (GlcNAc...) asparagine glycans are attached at residues N37, N77, and N101.

It belongs to the ependymin family. As to quaternary structure, forms disulfide-linked dimers. Post-translationally, binds calcium through the terminal sialic acids. EPDs are synthesized in the meninx and secreted in the cerebrospinal fluid.

The protein resides in the secreted. Functionally, may play a role in neural plasticity. May be involved during axon regeneration. The chain is Ependymin (epd) from Esox lucius (Northern pike).